The following is a 144-amino-acid chain: Large ribosomal subunit protein uL15 (144 aa).

The interval 1-54 (MKLNTIKPAEGAKHARRRVGRGIGSGLGKTGGRGHKGQKSRAGGFHKVGFEGGQ) is disordered. Residues 21 to 31 (RGIGSGLGKTG) are compositionally biased toward gly residues.

The protein belongs to the universal ribosomal protein uL15 family. As to quaternary structure, part of the 50S ribosomal subunit.

Functionally, binds to the 23S rRNA. In Methylobacillus flagellatus (strain ATCC 51484 / DSM 6875 / VKM B-1610 / KT), this protein is Large ribosomal subunit protein uL15.